Reading from the N-terminus, the 223-residue chain is Endonuclease V (223 aa).

2 residues coordinate Mg(2+): D35 and D103.

This sequence belongs to the endonuclease V family. Mg(2+) is required as a cofactor.

Its subcellular location is the cytoplasm. It catalyses the reaction Endonucleolytic cleavage at apurinic or apyrimidinic sites to products with a 5'-phosphate.. DNA repair enzyme involved in the repair of deaminated bases. Selectively cleaves double-stranded DNA at the second phosphodiester bond 3' to a deoxyinosine leaving behind the intact lesion on the nicked DNA. In Salmonella schwarzengrund (strain CVM19633), this protein is Endonuclease V.